The chain runs to 88 residues: MAHKKGTGSTRNGRDSNSKRLGVKAFGGESVTAGSILIRQRGTSVLPGVNVGKGKDDTLFALTDGFVKFESIKRGLRNRKRINITAAV.

Residues Met1–Val23 are disordered.

Belongs to the bacterial ribosomal protein bL27 family.

This is Large ribosomal subunit protein bL27 from Synechococcus sp. (strain CC9902).